Reading from the N-terminus, the 288-residue chain is Nucleotide-binding protein Veis_1053 (288 aa).

10–17 serves as a coordination point for ATP; it reads GMSGSGKS. 59 to 62 lines the GTP pocket; it reads DVRS.

It belongs to the RapZ-like family.

Displays ATPase and GTPase activities. This is Nucleotide-binding protein Veis_1053 from Verminephrobacter eiseniae (strain EF01-2).